A 381-amino-acid polypeptide reads, in one-letter code: Alkanesulfonate monooxygenase (381 aa).

Belongs to the SsuD family. Homotetramer.

The catalysed reaction is an alkanesulfonate + FMNH2 + O2 = an aldehyde + FMN + sulfite + H2O + 2 H(+). Functionally, catalyzes the desulfonation of aliphatic sulfonates. In Escherichia coli O7:K1 (strain IAI39 / ExPEC), this protein is Alkanesulfonate monooxygenase.